The following is a 70-amino-acid chain: Protein FlmC homolog (70 aa).

A disordered region spans residues 1 to 21; that stretch reads MSSPHQDSLLPRFAQGEEGHE.

This is Protein FlmC homolog from Escherichia coli.